The following is an 84-amino-acid chain: ORF8b protein (84 aa).

An SARS ORF8 Ig-like domain is found at 1–82 (MCLKILVRYN…RDVLVVLNKR (82 aa)). Cys22 and Cys40 form a disulfide bridge.

It localises to the host cytoplasm. The protein resides in the host nucleus. In terms of biological role, non-structural protein which is dispensable for virus replication in cell culture. The protein is ORF8b protein of Severe acute respiratory syndrome coronavirus (SARS-CoV).